We begin with the raw amino-acid sequence, 1259 residues long: Receptor tyrosine-protein kinase erbB-2 (1259 aa).

An N-terminal signal peptide occupies residues 1-22 (MELAAWCRWGLLLALLPSGAAG). At 23–653 (TQVCTGTDMK…EQRASPVTSI (631 aa)) the chain is on the extracellular side. Cys-26 and Cys-53 form a disulfide bridge. Residue Asn-68 is glycosylated (N-linked (GlcNAc...) asparagine). 13 disulfides stabilise this stretch: Cys-162–Cys-192, Cys-195–Cys-204, Cys-199–Cys-212, Cys-220–Cys-227, Cys-224–Cys-235, Cys-236–Cys-244, Cys-240–Cys-252, Cys-255–Cys-264, Cys-268–Cys-295, Cys-299–Cys-311, Cys-315–Cys-331, Cys-334–Cys-338, and Cys-342–Cys-367. At Thr-182 the chain carries Phosphothreonine. Asn-259 carries an N-linked (GlcNAc...) asparagine glycan. A glycan (N-linked (GlcNAc...) asparagine) is linked at Asn-421. Disulfide bonds link Cys-475–Cys-504, Cys-511–Cys-519, and Cys-514–Cys-527. The N-linked (GlcNAc...) asparagine glycan is linked to Asn-529. Disulfide bonds link Cys-530-Cys-539, Cys-543-Cys-559, Cys-562-Cys-575, Cys-566-Cys-583, Cys-586-Cys-595, Cys-599-Cys-622, Cys-625-Cys-633, and Cys-629-Cys-641. A glycan (N-linked (GlcNAc...) asparagine) is linked at Asn-570. Residue Asn-628 is glycosylated (N-linked (GlcNAc...) asparagine). The chain crosses the membrane as a helical span at residues 654–674 (IAAVVGILLAVVVGLVLGILI). The interval 675-688 (KRRRQKIRKYTMRR) is required for interaction with KPNB1 and EEA1. The Nuclear localization signal motif lies at 675–688 (KRRRQKIRKYTMRR). The Cytoplasmic segment spans residues 675–1259 (KRRRQKIRKY…PEYLGLDVPV (585 aa)). A Protein kinase domain is found at 719 to 986 (LRKVKVLGSG…RMARDPQRFV (268 aa)). Residues 725–733 (LGSGAFGTV) and Lys-752 contribute to the ATP site. Asp-844 functions as the Proton acceptor in the catalytic mechanism. At Tyr-876 the chain carries Phosphotyrosine. The disordered stretch occupies residues 1027–1183 (QGFFCPEPTP…PKTLSPGKNG (157 aa)). Phosphoserine is present on residues Ser-1077, Ser-1082, and Ser-1106. Tyr-1111 is modified (phosphotyrosine). A Phosphotyrosine; by autocatalysis modification is found at Tyr-1138. Positions 1145–1160 (WPQPPLALEGPLPPSR) are enriched in pro residues. Thr-1165 carries the post-translational modification Phosphothreonine. Residues 1199 to 1201 (EYL) are interaction with PIK3C2B. Tyr-1200 carries the phosphotyrosine modification. Residues 1203 to 1259 (PRGRAAPQPHPPPAFSPAFDNLYYWDQDPSERGSPPSTFEGTPTAENPEYLGLDVPV) form a disordered region. Residues 1237–1247 (PPSTFEGTPTA) show a composition bias toward polar residues. Phosphotyrosine; by autocatalysis is present on Tyr-1252.

It belongs to the protein kinase superfamily. Tyr protein kinase family. EGF receptor subfamily. Homodimer. Heterodimer with EGFR, ERBB3 and ERBB4. Part of a complex with EGFR and either PIK3C2A or PIK3C2B. May interact with PIK3C2B when phosphorylated on Tyr-1200. Interacts with PRKCABP and PLXNB1. Interacts (when phosphorylated on Tyr-1252) with MEMO1. Interacts with MUC1. Interacts (when phosphorylated on Tyr-1138) with GRB7 (via SH2 domain). Interacts (when phosphorylated on Tyr-1252) with ERBIN. Interacts with SRC, KPNB1, PTK6, RANBP2, EEA1, CRM1, CLTC, RPA194, MYOC and ACTB. Interacts (preferentially with the tyrosine phosphorylated form) with CPNE3; this interaction occurs at the cell membrane and is increased in a growth factor heregulin-dependent manner. Interacts with HSP90AA1 and HSP90AB1 in an ATP-dependent manner; the interaction suppresses ERBB2 kinase activity. Interacts with SORL1; this interaction regulates ERBB2 subcellular distribution by promoting its recycling after internalization from endosomes back to the plasma membrane, hence stimulates ERBB2-mediated signaling. Interacts with SH3BGRL. Interacts with ROR1. Post-translationally, autophosphorylated. Autophosphorylation occurs in trans, i.e. one subunit of the dimeric receptor phosphorylates tyrosine residues on the other subunit. Ligand-binding increases phosphorylation on tyrosine residues. Signaling via SEMA4C promotes phosphorylation at Tyr-1252. Dephosphorylated by PTPN12.

Its subcellular location is the cell membrane. It is found in the cell projection. The protein resides in the ruffle membrane. It localises to the early endosome. The protein localises to the cytoplasm. Its subcellular location is the perinuclear region. It is found in the nucleus. It catalyses the reaction L-tyrosyl-[protein] + ATP = O-phospho-L-tyrosyl-[protein] + ADP + H(+). In terms of biological role, protein tyrosine kinase that is part of several cell surface receptor complexes, but that apparently needs a coreceptor for ligand binding. Essential component of a neuregulin-receptor complex, although neuregulins do not interact with it alone. GP30 is a potential ligand for this receptor. Regulates outgrowth and stabilization of peripheral microtubules (MTs). Upon ERBB2 activation, the MEMO1-RHOA-DIAPH1 signaling pathway elicits the phosphorylation and thus the inhibition of GSK3B at cell membrane. This prevents the phosphorylation of APC and CLASP2, allowing its association with the cell membrane. In turn, membrane-bound APC allows the localization of MACF1 to the cell membrane, which is required for microtubule capture and stabilization. Functionally, in the nucleus is involved in transcriptional regulation. Associates with the 5'-TCAAATTC-3' sequence in the PTGS2/COX-2 promoter and activates its transcription. Implicated in transcriptional activation of CDKN1A; the function involves STAT3 and SRC. Involved in the transcription of rRNA genes by RNA Pol I and enhances protein synthesis and cell growth. The sequence is that of Receptor tyrosine-protein kinase erbB-2 (ERBB2) from Canis lupus familiaris (Dog).